The chain runs to 822 residues: Structure-specific endonuclease subunit SLX4 (822 aa).

Disordered stretches follow at residues 1-39, 73-117, 277-362, 390-418, 456-507, and 589-676; these read MSHL…PSAS, TPAV…PRPL, GTTN…GVSD, RVSS…TSVS, KSHE…SGQL, and KNSA…QASS. The segment covering 13–39 has biased composition (polar residues); it reads SPSPSQIFGSSTTPVATNSTHSEPSAS. A compositionally biased stretch (low complexity) spans 280-294; the sequence is NSSSSEGSSNKSSGK. Residues 310-320 are compositionally biased toward polar residues; the sequence is VTTITSLSTAQ. Basic residues predominate over residues 342-354; it reads GKRSKSQTKKGGN. Positions 460–470 are enriched in low complexity; the sequence is SSTLTLPSTST. Over residues 471–484 the composition is skewed to polar residues; the sequence is NASNQGFSSQNTIN. A compositionally biased stretch (low complexity) spans 490–506; sequence SQTTSTTTESTGVESGQ. Residues 589 to 612 are compositionally biased toward polar residues; the sequence is KNSAPTSLPANNANPPDSHASGQK. Positions 627–636 are enriched in basic residues; the sequence is TTKRASKAPQ. Residues 637-650 are compositionally biased toward low complexity; the sequence is KKQSTSSTSHSAKA.

It belongs to the SLX4 family. Forms a heterodimer with SLX1. In terms of processing, phosphorylated in response to DNA damage.

The protein localises to the nucleus. Regulatory subunit of the SLX1-SLX4 structure-specific endonuclease that resolves DNA secondary structures generated during DNA repair and recombination. Has endonuclease activity towards branched DNA substrates, introducing single-strand cuts in duplex DNA close to junctions with ss-DNA. This is Structure-specific endonuclease subunit SLX4 from Coccidioides immitis (strain RS) (Valley fever fungus).